The primary structure comprises 165 residues: Thiol peroxidase (165 aa).

In terms of domain architecture, Thioredoxin spans proline 17 to alanine 165. Cysteine 59 functions as the Cysteine sulfenic acid (-SOH) intermediate in the catalytic mechanism. A disulfide bridge links cysteine 59 with cysteine 93.

Belongs to the peroxiredoxin family. Tpx subfamily. As to quaternary structure, homodimer.

The catalysed reaction is a hydroperoxide + [thioredoxin]-dithiol = an alcohol + [thioredoxin]-disulfide + H2O. Thiol-specific peroxidase that catalyzes the reduction of hydrogen peroxide and organic hydroperoxides to water and alcohols, respectively. Plays a role in cell protection against oxidative stress by detoxifying peroxides. The polypeptide is Thiol peroxidase (Haemophilus influenzae (strain ATCC 51907 / DSM 11121 / KW20 / Rd)).